We begin with the raw amino-acid sequence, 146 residues long: Large ribosomal subunit protein uL16 (146 aa).

The protein belongs to the universal ribosomal protein uL16 family. As to quaternary structure, part of the 50S ribosomal subunit.

In terms of biological role, binds 23S rRNA and is also seen to make contacts with the A and possibly P site tRNAs. In Thermomicrobium roseum (strain ATCC 27502 / DSM 5159 / P-2), this protein is Large ribosomal subunit protein uL16.